Here is a 109-residue protein sequence, read N- to C-terminus: Flowering-promoting factor 1-like protein 1 (109 aa).

The short motif at 73–81 (RGSLDLISL) is the D-box element.

This sequence belongs to the FPF1 family. Interacts with RPT4. Ubiquitinated. RPT4 mediates its proteasome-dependent degradation. In terms of tissue distribution, specifically expressed in the apical meristem, the elongation zone of root tip, steles of the branch zone, and the young lateral root. Also expressed in spikes. Expressed in roots and spikes (at protein level).

It localises to the cytoplasm. The protein localises to the nucleus. Its function is as follows. GTP-binding protein that functions in the development of root systems, which are mediated by auxin. Acts as a cell cycle regulator during root development. Proteasome-mediated degradation of the protein is necessary for the transition of metaphase to anaphase in mitosis. In Oryza sativa subsp. japonica (Rice), this protein is Flowering-promoting factor 1-like protein 1 (RAA1).